Consider the following 341-residue polypeptide: MEGLSFGPLSILPSLAEELNPHRVAFLTNTTVERLWLEKAAEGIEEPIRIVIPDGEKYKSLETAVAIWKRLQEEGFTRKSLLIGLGGGVVTDIAGFVASTYMRGTLLGLVPTTLLAQVDAAIGGKTGVNFNGKNMIGTFYLPNFVLIAHETLSTLPEEEIRNGLGEVAKYALLDRKVYALARNFEGISETLIRECALFKVEVVEKDLGESGLRRILNLGHTAGHAIEKLSNYRIKHGLAVSMGLMVASKVGEELYGFDSGKTEELLKKLGLPTGHPFRAEEILEEMRLDKKAWYGRITFVIPVEIGDVVVEEVDEAVLKRALEATRDDSGSGDCQKPGGSA.

Residues 54-59, 88-92, 112-113, lysine 125, lysine 133, and 151-154 each bind NAD(+); these read DGEKYK, GVVTD, TT, and TLST. Zn(2+)-binding residues include glutamate 166, histidine 220, and histidine 236.

Belongs to the sugar phosphate cyclases superfamily. Dehydroquinate synthase family. NAD(+) is required as a cofactor. The cofactor is Co(2+). It depends on Zn(2+) as a cofactor.

It is found in the cytoplasm. It catalyses the reaction 7-phospho-2-dehydro-3-deoxy-D-arabino-heptonate = 3-dehydroquinate + phosphate. It participates in metabolic intermediate biosynthesis; chorismate biosynthesis; chorismate from D-erythrose 4-phosphate and phosphoenolpyruvate: step 2/7. Its function is as follows. Catalyzes the conversion of 3-deoxy-D-arabino-heptulosonate 7-phosphate (DAHP) to dehydroquinate (DHQ). This Thermococcus kodakarensis (strain ATCC BAA-918 / JCM 12380 / KOD1) (Pyrococcus kodakaraensis (strain KOD1)) protein is 3-dehydroquinate synthase.